The sequence spans 379 residues: MTAAPASVRLFQTHEMEALRRDRRLDPQVFRKLRNDLLKKFESDEAVLEKYPVAEAIELHSLKLYQRMDSEIDGATKLLFETESGMLIESVILRIATGRTTLCVSSQIGCAAACDFCATGKMGIAKNLATEEILDQVVQAGQILRGEDRRLSNIVFMGMGEPLHNEVNVTEAIELLTAPDHFARSPSTVLVSTVGVPAGMLRLAKRFPNLNLALSLHSADQTTREKIIPLGKKASLAQLHDAIHEIQTIQDREFMIEYLMLRDVNDSAKDADRLIDWIGDLRVHVNLIPYNTIEASPHLHASSRPVIESFADILKASGLKTTVRYSLGNDIEAACGQLIRQENRQRAMQARRTESESDSHVGFLDVRQVVDGLESQKNK.

E89 serves as the catalytic Proton acceptor. One can recognise a Radical SAM core domain in the interval 96 to 332; sequence ATGRTTLCVS…VRYSLGNDIE (237 aa). The cysteines at positions 103 and 335 are disulfide-linked. The [4Fe-4S] cluster site is built by C110, C114, and C117. S-adenosyl-L-methionine is bound by residues 160-161, S192, 215-217, and N291; these read GE and SLH. The active-site S-methylcysteine intermediate is the C335.

The protein belongs to the radical SAM superfamily. RlmN family. [4Fe-4S] cluster is required as a cofactor.

The protein resides in the cytoplasm. The polypeptide is Probable RNA methyltransferase RB6963 (Rhodopirellula baltica (strain DSM 10527 / NCIMB 13988 / SH1)).